A 151-amino-acid chain; its full sequence is GTP-dependent dephospho-CoA kinase (151 aa).

Residues aspartate 30, valine 31, aspartate 49, lysine 51, and glutamate 104 each coordinate GTP.

Belongs to the GTP-dependent DPCK family.

The enzyme catalyses 3'-dephospho-CoA + GTP = GDP + CoA + H(+). The protein operates within cofactor biosynthesis; coenzyme A biosynthesis. In terms of biological role, catalyzes the GTP-dependent phosphorylation of the 3'-hydroxyl group of dephosphocoenzyme A to form coenzyme A (CoA). This is GTP-dependent dephospho-CoA kinase from Cenarchaeum symbiosum (strain A).